We begin with the raw amino-acid sequence, 811 residues long: Glycerol-3-phosphate acyltransferase (811 aa).

Residues 303–308 (HRSHMD) carry the HXXXXD motif motif.

The protein belongs to the GPAT/DAPAT family.

It is found in the cell inner membrane. It carries out the reaction sn-glycerol 3-phosphate + an acyl-CoA = a 1-acyl-sn-glycero-3-phosphate + CoA. It functions in the pathway phospholipid metabolism; CDP-diacylglycerol biosynthesis; CDP-diacylglycerol from sn-glycerol 3-phosphate: step 1/3. The sequence is that of Glycerol-3-phosphate acyltransferase from Haemophilus ducreyi (strain 35000HP / ATCC 700724).